Reading from the N-terminus, the 303-residue chain is MSDNILVLGAGELGTAILEALAKHPSRANAKLSVLLRPSSINSTAPEKKKQIEHLQGLGITPQPGDVESSTSELAAIFRNYDTIISCNGMGRPFGTQTKLADAVFEAGVKRYFPWQFGMDYDAIGTGSDQDRFDEQINIRKKLRAQNKTEWTIVSTGLFMSFLFLTDFGVINLEQKVTRGLGTWDTKITVTVPRDIGRVTADIVFDPRGIANEVVHIAGDTLSYKEIADLVDERFGEGTFRRELWDMETLKKQLAEGRPVAEYKATFAVGKGVAWDREGTVNMARGIQMTGLREYLKDVNLVK.

NADP(+)-binding positions include 8–13, 8–14, 36–39, Arg-37, 56–57, 77–79, and 159–162; these read LGAGEL, LGAGELG, LRPS, QG, IFR, and FMSF.

The protein belongs to the NmrA-type oxidoreductase family.

In terms of biological role, nmrA-like family domain-containing oxidoreductase; part of the Fusarium detoxification of benzoxazolinone cluster 1 (FDB1) involved in the degradation of benzoxazolinones produced by the host plant. Maize, wheat, and rye produce the 2 benzoxazinone phytoanticipins 2,4-dihy-droxy-7-methoxy-1,4-benzoxazin-3-one (DIMBOA) and 2,4-dihydroxy-1,4-benzoxazin-3-one (DIBOA) that, due to their inherent instability once released, spontaneously degrade to the more stable corresponding benzoxazolinones, 6-methoxy-2-benzoxazolinone (MBOA) and 2-benzoxazolinone (BOA), respectively. The first step in the detoxification of benzoxazolinones involves the hydrolysis of the cyclic ester bond of benzoxazolinones by the FDB1 cluster gamma-lactamase MBL1 to aminophenols. MBL1 is able to convert BOA into 2-aminophenol (2-AP), as well as MBOA into 5-methoxy-2-aminophenol (2-AMP). The FDB2 cluster N-malonyltransferase FDB2/NAT1 then metabolizes aminophenols via N-malonylation to non-toxic malonamic acids. FDB2/NAT1 converts 2-AP into N-(2-hydroxyphenyl) malonamic acid (HPMA) and 2-AMP into N-(2-hydroxy-4-methoxyphenyl) malonamic acid (HMPMA). The duplicated dienlactone hydrolases DLH1 and DLH2 may provide redundant function for hydrolyzing the lactone moiety in the BOA molecule. The roles of the amidases an other enzymes encoded by the 2 FDB clusters have not been identified so far. The polypeptide is NmrA-like family domain-containing oxidoreductase FVEG_08287 (Gibberella moniliformis (strain M3125 / FGSC 7600) (Maize ear and stalk rot fungus)).